We begin with the raw amino-acid sequence, 93 residues long: UPF0358 protein LMHCC_1561 (93 aa).

This sequence belongs to the UPF0358 family.

The sequence is that of UPF0358 protein LMHCC_1561 from Listeria monocytogenes serotype 4a (strain HCC23).